Here is a 100-residue protein sequence, read N- to C-terminus: MINEERLLKVLLAPNISEKATTAAEANNTVVFKVATDATKAEIKAAVEKLFEVTVEGVNTLNVKGKVKRTGARFGRRNDWKKAYVTLAEGSDIDFVGAES.

The protein belongs to the universal ribosomal protein uL23 family. As to quaternary structure, part of the 50S ribosomal subunit. Contacts protein L29, and trigger factor when it is bound to the ribosome.

Functionally, one of the early assembly proteins it binds 23S rRNA. One of the proteins that surrounds the polypeptide exit tunnel on the outside of the ribosome. Forms the main docking site for trigger factor binding to the ribosome. The polypeptide is Large ribosomal subunit protein uL23 (Colwellia psychrerythraea (strain 34H / ATCC BAA-681) (Vibrio psychroerythus)).